The chain runs to 513 residues: Xylose import ATP-binding protein XylG (513 aa).

ABC transporter domains follow at residues 5-242 (LEMK…VGRE) and 259-505 (LRIE…LRSE). 37-44 (GENGSGKS) contacts ATP.

This sequence belongs to the ABC transporter superfamily. Xylose importer (TC 3.A.1.2.4) family. The complex is composed of two ATP-binding proteins (XylG), two transmembrane proteins (XylH) and a solute-binding protein (XylF).

It localises to the cell inner membrane. It catalyses the reaction D-xylose(out) + ATP + H2O = D-xylose(in) + ADP + phosphate + H(+). Functionally, part of the ABC transporter complex XylFGH involved in xylose import. Responsible for energy coupling to the transport system. The sequence is that of Xylose import ATP-binding protein XylG from Escherichia coli O6:K15:H31 (strain 536 / UPEC).